The chain runs to 203 residues: CS5 fimbrial subunit (203 aa).

The first 22 residues, 1 to 22 (MKKNLLITSVLAMATVSGSVLA), serve as a signal peptide directing secretion.

The protein resides in the fimbrium. Major subunit of fimbriae. Fimbriae (also called pili), are polar filaments radiating from the surface of the bacterium to a length of 0.5-1.5 micrometers and numbering 100-300 per cell. They enable bacteria to colonize the epithelium of specific host organs. The chain is CS5 fimbrial subunit from Escherichia coli.